A 234-amino-acid polypeptide reads, in one-letter code: Large ribosomal subunit protein uL1 (234 aa).

This sequence belongs to the universal ribosomal protein uL1 family. Part of the 50S ribosomal subunit.

Binds directly to 23S rRNA. The L1 stalk is quite mobile in the ribosome, and is involved in E site tRNA release. Functionally, protein L1 is also a translational repressor protein, it controls the translation of the L11 operon by binding to its mRNA. The polypeptide is Large ribosomal subunit protein uL1 (Geobacter metallireducens (strain ATCC 53774 / DSM 7210 / GS-15)).